A 361-amino-acid polypeptide reads, in one-letter code: D-alanine--D-alanine ligase (361 aa).

One can recognise an ATP-grasp domain in the interval 134 to 344 (KLLLKSFNIP…FKDLVDNLIN (211 aa)). Residue 167 to 222 (REALGYPVIVKPAVLGSSIGINVAYSENQIEFFIEEALKYDLTILIEKFIEAREIE) coordinates ATP. Residues aspartate 297, glutamate 311, and asparagine 313 each coordinate Mg(2+).

It belongs to the D-alanine--D-alanine ligase family. Mg(2+) serves as cofactor. Requires Mn(2+) as cofactor.

It is found in the cytoplasm. It carries out the reaction 2 D-alanine + ATP = D-alanyl-D-alanine + ADP + phosphate + H(+). The protein operates within cell wall biogenesis; peptidoglycan biosynthesis. Cell wall formation. This chain is D-alanine--D-alanine ligase, found in Borrelia garinii subsp. bavariensis (strain ATCC BAA-2496 / DSM 23469 / PBi) (Borreliella bavariensis).